The following is a 546-amino-acid chain: DDB1- and CUL4-associated factor 11 (546 aa).

Residues 1-19 are compositionally biased toward low complexity; the sequence is MGSRNSSSAGSGSGDPSEG. Residues 1 to 40 are disordered; sequence MGSRNSSSAGSGSGDPSEGLTRRGAGLRRSEEEEEEDEDV. Serine 75 bears the Phosphoserine mark. WD repeat units follow at residues 170-210, 216-258, 263-302, 305-345, 353-392, 435-480, and 481-520; these read SYSQ…RKFK, DVGW…TALD, ERRFAVFSIAVSSDGREVLGGANDGCLYVFDREQNRRTLQ, SHED…EDDP, GHQDGITFIDSKGDARYLISNSKDQTIKLWDIRRFSSREG, GVLH…KKLT, and NHKACVRDVSWHPFEEKIVSSSWDGNLRLWQYRQAEYFQD. Residues 523 to 546 form a disordered region; the sequence is PESEECASAPAPVPRSSTPFSSPQ. The span at 537–546 shows a compositional bias: polar residues; that stretch reads RSSTPFSSPQ.

As to quaternary structure, interacts with DDB1 and CUL4A.

Its pathway is protein modification; protein ubiquitination. Its function is as follows. May function as a substrate receptor for CUL4-DDB1 E3 ubiquitin-protein ligase complex. This Pongo abelii (Sumatran orangutan) protein is DDB1- and CUL4-associated factor 11 (DCAF11).